Consider the following 419-residue polypeptide: MERHSLNTSVKMPVSASLACKNYDYDYDSIQPYFYFDNDDEDFYHHQQGQTQPSAPSEDIWKKFELLPTPPLSPSRRQSLSTAEQLEMVSEFLGDDVVSQSFICDDADYSQSFIKSIIIQDCMWSGFSAAAKLEKVVSERLASLHAERKELMSDSNSNRLNASYLQDLSTSASECIDPSVVFPYPLTECGKAGKVASPQPMLVLDTPPNSSSSSGSDSEDEEEEDEEEEEEEEEEEEEEEEEEIDVVTVEKRQKRHETDASESRYPSPLVLKRCHVSTHQHNYAAHPSTRHDQPAVKRLRLEASNNHSINSSSSNRHVKQRKCASPRTSDSEDNDKRRTHNVLERQRRNELKLSFFALRDEIPEVANNEKAAKVVILKKATECIHSMQLDEQRLLSIKEQLRRKSEQLKHRLQQLRSSH.

The O-linked (GlcNAc) threonine glycan is linked to T69. The 9aaTAD signature appears at 87 to 95 (EMVSEFLGD). Disordered stretches follow at residues 199–269 (QPML…PSPL) and 305–343 (NNHS…HNVL). Residues 217 to 245 (DSEDEEEEDEEEEEEEEEEEEEEEEEEID) show a composition bias toward acidic residues. Basic and acidic residues predominate over residues 248–262 (TVEKRQKRHETDASE). Over residues 305-315 (NNHSINSSSSN) the composition is skewed to low complexity. Residues 335–387 (DKRRTHNVLERQRRNELKLSFFALRDEIPEVANNEKAAKVVILKKATECIHSM) form the bHLH domain. The interval 394 to 415 (LLSIKEQLRRKSEQLKHRLQQL) is leucine-zipper.

As to quaternary structure, efficient DNA binding requires dimerization with another bHLH protein. Binds DNA as a heterodimer with max. High levels are seen in the kidney, gills and uterus.

The protein resides in the nucleus. Functionally, transcription factor that binds DNA in a non-specific manner, yet also specifically recognizes the core sequence 5'-CAC[GA]TG-3'. Activates the transcription of growth-related genes. This Danio rerio (Zebrafish) protein is Transcriptional regulator Myc-A (myca).